Consider the following 264-residue polypeptide: MQQYLDLLAHVMEKGSDRGDRTGTGTRSVFGYQMRFDLGEGFPVLTTKKLHLRSIVHELLWFLKGETNIRYLKENGVSIWDEWADENGDLGPVYGAQWRSWPAPDGGHIDQIANLVKGIVNNPNSRRHIVSAWNPAEVDQMALPPCHCLFQFYVADGKLSCQLYQRSADVFLGVPFNIASYALLTMMVAQVTGLKGGDFVHTLGDAHLYHNHFDQAKLQLTRRPKPLPFMRINPEVKDIFGFTFDDFELIGYEADASIKAPIAV.

A dUMP-binding site is contributed by arginine 21. Histidine 51 is a (6R)-5,10-methylene-5,6,7,8-tetrahydrofolate binding site. Residue arginine 126–arginine 127 participates in dUMP binding. Residue cysteine 146 is the Nucleophile of the active site. Residues arginine 166–aspartate 169, asparagine 177, and histidine 207–tyrosine 209 contribute to the dUMP site. Aspartate 169 provides a ligand contact to (6R)-5,10-methylene-5,6,7,8-tetrahydrofolate. Residue alanine 263 coordinates (6R)-5,10-methylene-5,6,7,8-tetrahydrofolate.

It belongs to the thymidylate synthase family. Bacterial-type ThyA subfamily. In terms of assembly, homodimer.

Its subcellular location is the cytoplasm. The catalysed reaction is dUMP + (6R)-5,10-methylene-5,6,7,8-tetrahydrofolate = 7,8-dihydrofolate + dTMP. Its pathway is pyrimidine metabolism; dTTP biosynthesis. Catalyzes the reductive methylation of 2'-deoxyuridine-5'-monophosphate (dUMP) to 2'-deoxythymidine-5'-monophosphate (dTMP) while utilizing 5,10-methylenetetrahydrofolate (mTHF) as the methyl donor and reductant in the reaction, yielding dihydrofolate (DHF) as a by-product. This enzymatic reaction provides an intracellular de novo source of dTMP, an essential precursor for DNA biosynthesis. This chain is Thymidylate synthase, found in Rhizobium etli (strain ATCC 51251 / DSM 11541 / JCM 21823 / NBRC 15573 / CFN 42).